The following is a 548-amino-acid chain: Biotin-dependent acetyl-/propionyl-coenzyme A carboxylase beta5 subunit (548 aa).

Residues 1–23 are disordered; that stretch reads MTSVTDRSAHSAERSTEHTIDIH. Residues 7 to 21 show a composition bias toward basic and acidic residues; that stretch reads RSAHSAERSTEHTID. In terms of domain architecture, CoA carboxyltransferase N-terminal spans 25–281; sequence TAGKLAELHK…NNSTDAPRYQ (257 aa). Residues 295–541 form the CoA carboxyltransferase C-terminal domain; that stretch reads DEDLELDTLI…ERKIAQLPPK (247 aa).

The protein belongs to the AccD/PCCB family. In terms of assembly, the biotin-dependent acyl-CoA carboxylase complex is composed of AccA3, which contains the biotin carboxylase (BC) and biotin carboxyl carrier protein (BCCP) domains, and AccD5, which contains the carboxyl transferase (CT) domain.

It carries out the reaction N(6)-carboxybiotinyl-L-lysyl-[protein] + acetyl-CoA = N(6)-biotinyl-L-lysyl-[protein] + malonyl-CoA. The catalysed reaction is N(6)-carboxybiotinyl-L-lysyl-[protein] + propanoyl-CoA = methylmalonyl-CoA + N(6)-biotinyl-L-lysyl-[protein]. The protein operates within lipid metabolism; mycolic acid biosynthesis. Functionally, component of a biotin-dependent acyl-CoA carboxylase complex. This subunit transfers the CO2 from carboxybiotin to the CoA ester substrate. When associated with the alpha3 subunit AccA3, is involved in the carboxylation of acetyl-CoA and propionyl-CoA. This Mycobacterium tuberculosis (strain CDC 1551 / Oshkosh) protein is Biotin-dependent acetyl-/propionyl-coenzyme A carboxylase beta5 subunit (accD5).